The following is a 533-amino-acid chain: GMP synthase [glutamine-hydrolyzing] (533 aa).

Positions 25 to 215 (SIVIFDFGSQ…VFNICKCHAN (191 aa)) constitute a Glutamine amidotransferase type-1 domain. The Nucleophile role is filled by Cys-102. Catalysis depends on residues His-189 and Glu-191. The GMPS ATP-PPase domain occupies 216-408 (WTMGNYIQES…LGLPDEMIWR (193 aa)). 243–249 (SGGVDSA) is a binding site for ATP.

In terms of assembly, homodimer.

The enzyme catalyses XMP + L-glutamine + ATP + H2O = GMP + L-glutamate + AMP + diphosphate + 2 H(+). It participates in purine metabolism; GMP biosynthesis; GMP from XMP (L-Gln route): step 1/1. In terms of biological role, catalyzes the synthesis of GMP from XMP. This is GMP synthase [glutamine-hydrolyzing] from Dehalococcoides mccartyi (strain ATCC BAA-2266 / KCTC 15142 / 195) (Dehalococcoides ethenogenes (strain 195)).